The primary structure comprises 426 residues: UPF0597 protein CLB_1750 (426 aa).

It belongs to the UPF0597 family.

This Clostridium botulinum (strain ATCC 19397 / Type A) protein is UPF0597 protein CLB_1750.